A 712-amino-acid chain; its full sequence is Phosphatase and actin regulator 4 (712 aa).

Disordered stretches follow at residues 1-22 (MGQA…GQPT) and 90-405 (RGLL…EVPK). An RPEL 1 repeat occupies 72 to 97 (EVLERKISMRKPREELVKRGLLLEDS). Residues 114–124 (NGHTTLIGSTR) show a composition bias toward polar residues. Residues serine 125, serine 127, serine 140, and serine 156 each carry the phosphoserine modification. Residues 136–152 (ERIASLRKPVPEEEPKK) show a composition bias toward basic and acidic residues. A compositionally biased stretch (low complexity) spans 198–230 (ATSSGSLARPSSSASTTAITTAPAATMAATNPA). Positions 233-243 (VHSSGPPSQAP) are enriched in polar residues. Low complexity predominate over residues 245-267 (TLPAAPASTHTTATLSLTHTGPA). A phosphoserine mark is found at serine 282, serine 303, and serine 353. Residues 345–357 (SEPLLTPSSSPLP) show a composition bias toward low complexity. A compositionally biased stretch (pro residues) spans 358 to 371 (AHIPPEPPQSPPFP). Phosphoserine is present on serine 436. Position 441 is a phosphothreonine (threonine 441). Phosphoserine occurs at positions 452, 462, 473, 524, 526, 567, and 600. Positions 507-557 (VIPKLPQCLQEEEEGKESDSDSEGPIQYRDEEDEDESHHSALANKVKRKDT) are disordered. The segment covering 516 to 528 (QEEEEGKESDSDS) has biased composition (acidic residues). 2 RPEL repeats span residues 593-618 (NTLI…QPKN) and 631-656 (RRLT…RFNE). The disordered stretch occupies residues 602–626 (RPTPEELEQRNILQPKNEADRQAEK). Serine 638 carries the post-translational modification Phosphoserine.

The protein belongs to the phosphatase and actin regulator family. Binds PPP1CA and actin.

It is found in the cytoplasm. It localises to the cell projection. The protein localises to the lamellipodium. Its function is as follows. Regulator of protein phosphatase 1 (PP1) required for neural tube and optic fissure closure, and enteric neural crest cell (ENCCs) migration during development. Acts as an activator of PP1 by interacting with PPP1CA and preventing phosphorylation of PPP1CA at 'Thr-320'. During neural tube closure, localizes to the ventral neural tube and activates PP1, leading to down-regulate cell proliferation within cranial neural tissue and the neural retina. Also acts as a regulator of migration of enteric neural crest cells (ENCCs) by activating PP1, leading to dephosphorylation and subsequent activation of cofilin (COF1 or COF2) and repression of the integrin signaling through the RHO/ROCK pathway. This is Phosphatase and actin regulator 4 (PHACTR4) from Bos taurus (Bovine).